The primary structure comprises 265 residues: Probable esterase tazC (265 aa).

Residues S119, D209, and H236 each act as charge relay system in the active site.

Belongs to the LovG family.

Its pathway is secondary metabolite biosynthesis. In terms of biological role, probable esterase; part of the gene cluster that mediates the biosynthesis of azaterrilone A and other azaphilones, a class of fungal metabolites characterized by a highly oxygenated pyrano-quinone bicyclic core and exhibiting a broad range of bioactivities. The first step of the pathway begins with the non-reducing polyketide synthase tazA that assembles one acetyl-CoA starter unit, five malonyl-CoA units, and catalyzes a series of Claisen condensations, methylation, PT-mediated cyclization, and finally releases the first hexaketide precursor through the R-domain. The tazA product then undergoes reduction on its terminal ketone and the following pyran-ring formation by yet undetermined enzyme(s). Dehydration and enoyl reduction, possibly involving the trans-enoyl reductase tazE leads to the next intermediate. TazD is predicted as an acetyltransferase and might catalyze the acetylation steps leading to the synthesis of azaterrilone A. Azaterrilone A is not the final product of the taz pathway and both the highly reducing polyketide synthase tazB and the dual enzyme tazHJ catalyze late steps of the pathway, leading to the production of the 2 final stereoisomers that contain additional polyketide modification whose structures have still to be determined. This chain is Probable esterase tazC, found in Aspergillus terreus (strain NIH 2624 / FGSC A1156).